The primary structure comprises 152 residues: Protein FERTILITY RESTORER RF2, mitochondrial (152 aa).

The transit peptide at 1–52 (MSTLVTCSLPGAVTTHASTRRFGGSQFQTSQASCISFKREVSAKAVLRSVRC) directs the protein to the mitochondrion. Residues 52–69 (CNATQTQSAQRKSSTATV) are compositionally biased toward polar residues. Positions 52 to 99 (CNATQTQSAQRKSSTATVKRSDPKGKIQGPKLDDGSGGFPPFRFGKGG) are disordered.

The protein localises to the mitochondrion. Restores fertility in rice varieties with LD-type cytoplasmic male sterility (CMS). CMS is caused by genetic incompatibility between nuclei and mitochondria within male reproductive organs. Corresponds to the functional allele of RF2, which is dependent of the presence of Ile-78 in the japonica cultivars Fukuyama and Owarihatamochi (AC F1SZ42), and indica cultivar Kasalath (AC F1SZ41). Non-functional RF2 alleles are found in japonica cultivars Taichung 65 and Nipponbare (AC F1SZ44), where Ile-78 is replaced by Thr-78. This is Protein FERTILITY RESTORER RF2, mitochondrial from Oryza sativa subsp. japonica (Rice).